Reading from the N-terminus, the 139-residue chain is Large ribosomal subunit protein uL16 (139 aa).

It belongs to the universal ribosomal protein uL16 family. As to quaternary structure, part of the 50S ribosomal subunit.

Its function is as follows. Binds 23S rRNA and is also seen to make contacts with the A and possibly P site tRNAs. The polypeptide is Large ribosomal subunit protein uL16 (Protochlamydia amoebophila (strain UWE25)).